A 712-amino-acid polypeptide reads, in one-letter code: Autophagy-related protein 13 (712 aa).

Disordered stretches follow at residues 388–443 and 568–611; these read AGST…ETPP and GSVG…DDDE. Over residues 402–415 the composition is skewed to low complexity; the sequence is SSVGSGSKYSSSFG. The tract at residues 412–420 is ATG17-binding; that stretch reads SSFGRIRRH. The segment covering 424 to 439 has biased composition (basic and acidic residues); that stretch reads RRSESIDRTAKPRKSN. The ATG1-binding stretch occupies residues 441–500; that stretch reads TPPEDLLEFVKLLEDKKELNMKPSTILPQQDISSSLIKFQSMKPNNDTLSDNLSMSMSID. The span at 576-585 shows a compositional bias: acidic residues; sequence TNEDSKEDED.

It belongs to the ATG13 family. Fungi subfamily. Hypophosphorylated form interacts with ATG1 to form the ATG1-ATG13 kinase complex. The ATG1-ATG13 complex interacts with the ATG17-ATG29-ATG31 complex through direct interaction with ATG17. Interacts with VAC8. Hyperphosphorylated under nutrient-rich conditions. Starvation and TOR inactivation results in ATG13 partial dephosphorylation leading to ATG1-binding. Dephosphorylation induces ATG17-binding.

The protein localises to the cytoplasm. It localises to the preautophagosomal structure. In terms of biological role, activates the ATG1 kinase in a nutritional condition dependent manner through the TOR pathway, leading to autophagy. Involved in ATG9 and ATG23 cycling through the pre-autophagosomal structure. Also involved in cytoplasm to vacuole transport (Cvt) and more specifically in Cvt vesicle formation. Seems to play a role in the switching machinery regulating the conversion between the Cvt pathway and autophagy. Finally, ATG13 is also required for glycogen storage during stationary phase. The chain is Autophagy-related protein 13 from Kluyveromyces marxianus (strain DMKU3-1042 / BCC 29191 / NBRC 104275) (Yeast).